A 217-amino-acid chain; its full sequence is Eukaryotic translation initiation factor 4E (217 aa).

Residues 1–11 (MATVEPETTPT) show a composition bias toward low complexity. The tract at residues 1–27 (MATVEPETTPTTNPPPAEEEKTESNQE) is disordered. Ala-2 bears the N-acetylalanine mark. At Thr-22 the chain carries Phosphothreonine. Residues 37–40 (HPLQ) form an EIF4EBP1/2/3 binding region. 56-57 (WQ) provides a ligand contact to mRNA. The EIF4EBP1/2/3 binding stretch occupies residues 73–77 (WALYN). 102-103 (WE) lines the mRNA pocket. Residues 132-139 (ETLLCLIG) are EIF4EBP1/2/3 binding. MRNA contacts are provided by residues 157–162 (RAKGDK) and 205–207 (TKS). The residue at position 209 (Ser-209) is a Phosphoserine; by PKC and MKNK2.

Belongs to the eukaryotic initiation factor 4E family. EIF4F is a multi-subunit complex, the composition of which varies with external and internal environmental conditions. It is composed of at least EIF4A, EIF4E and EIF4G1/EIF4G3. EIF4E is also known to interact with other partners. Interacts with EIF4ENIF1/4E-T; promotes recruitment to P-bodies and import into the nucleus. Hypophosphorylated EIF4EBP1, EIF4EBP2 and EIF4EBP3 compete with EIF4G1/EIF4G3 to interact with EIF4E; insulin stimulated MAP-kinase (MAPK1 and MAPK3) phosphorylation of EIF4EBP1 causes dissociation of the complex allowing EIF4G1/EIF4G3 to bind and consequent initiation of translation. Interacts mutually exclusive with EIF4A1 or EIF4A2. Interacts with NGDN and PIWIL2. Component of the CYFIP1-EIF4E-FMR1 complex composed of CYFIP, EIF4E and FMR1. Interacts directly with CYFIP1. Interacts with CLOCK. Binds to MKNK2 in nucleus. Interacts with LIMD1, WTIP and AJUBA. Interacts with APOBEC3G in an RNA-dependent manner. Interacts with LARP1. Interacts with METTL3. Interacts with RBM24; this interaction prevents EIF4E from binding to p53/TP53 mRNA and inhibits the assembly of translation initiation complex. Interacts with DDX3X; interaction is direct and in an RNA-independent manner; this interaction enhances EIF4E cap-binding ability and is required for the repression of cap-dependent translation and the increase of IRES-mediated translation. DDX3X competes with EIF4G1 for interaction with EIF4E. Interacts with EIF4G1; which in a mutual exclusive interaction associates either with EIF1 or with EIF4E on a common binding site. Interacts with BTG4 and CNOT7. Interacts with LRPPRC (via N-terminus); the interaction promotes association of EIF4E with 4ESE-containing mRNAs. Interacts with mRNA cleavage enzyme CPSF3 and its cofactor CPSF1. Interacts (via RING-type zinc finger) with PML; the interaction results in conformational changes of both interacting proteins and reduces EIF4E affinity for the 5' m7G cap of mRNA, thus reducing EIF4E-mediated mRNA nuclear export. Interacts with homeobox protein HHEX/PRH; the interaction inhibits EIF4E-mediated mRNA nuclear export. Interacts with homeobox protein HOXA9; the interaction positively regulates EIF4E-mediated mRNA nuclear export. Interacts with homeobox protein EMX2. In terms of assembly, (Microbial infection) Interacts with murine norovirus viral genome-linked protein; this interaction plays a role in translation of viral proteins. Phosphorylation increases the ability of the protein to bind to mRNA caps and to form the eIF4F complex. Phosphorylation also enhances its mRNA transport function. Phosphorylation at Ser-209 is not essential for protein synthesis.

It localises to the cytoplasm. The protein resides in the P-body. Its subcellular location is the stress granule. The protein localises to the nucleus. It is found in the nucleus speckle. It localises to the nuclear body. Its function is as follows. Acts in the cytoplasm to initiate and regulate protein synthesis and is required in the nucleus for export of a subset of mRNAs from the nucleus to the cytoplasm which promotes processes such as RNA capping, processing and splicing. Component of the protein complex eIF4F, which is involved in the recognition of the mRNA cap, ATP-dependent unwinding of 5'-terminal secondary structure and recruitment of mRNA to the ribosome. This protein recognizes and binds the 7-methylguanosine (m7G)-containing mRNA cap during an early step in the initiation of protein synthesis and facilitates ribosome binding by inducing the unwinding of the mRNAs secondary structures. Together with EIF4G1, antagonizes the scanning promoted by EIF1-EIF4G1 and is required for TISU translation, a process where the TISU element recognition makes scanning unnecessary. In addition to its role in translation initiation, also acts as a regulator of translation and stability in the cytoplasm. Component of the CYFIP1-EIF4E-FMR1 complex which binds to the mRNA cap and mediates translational repression: in the complex, EIF4E mediates the binding to the mRNA cap. Component of a multiprotein complex that sequesters and represses translation of proneurogenic factors during neurogenesis. In P-bodies, component of a complex that mediates the storage of translationally inactive mRNAs in the cytoplasm and prevents their degradation. May play an important role in spermatogenesis through translational regulation of stage-specific mRNAs during germ cell development. As well as its roles in translation, also involved in mRNA nucleocytoplasmic transport. Its role in mRNA export from the nucleus to the cytoplasm relies on its ability to bind the m7G cap of RNAs and on the presence of the 50-nucleotide EIF4E sensitivity element (4ESE) in the 3'UTR of sensitive transcripts. Interaction with the 4ESE is mediated by LRPPRC which binds simultaneously to both EIF4E and the 4ESE, thereby acting as a platform for assembly for the RNA export complex. EIF4E-dependent mRNA export is independent of ongoing protein or RNA synthesis and is also NFX1-independent but is XPO1-dependent with LRPPRC interacting with XPO1 to form an EIF4E-dependent mRNA export complex. Alters the composition of the cytoplasmic face of the nuclear pore to promote RNA export by reducing RANBP2 expression, relocalizing nucleoporin NUP214 and increasing expression of RANBP1 and RNA export factors DDX19 and GLE1. Promotes the nuclear export of cyclin CCND1 mRNA. Promotes the nuclear export of NOS2/iNOS mRNA. Promotes the nuclear export of MDM2 mRNA. Also promotes the export of additional mRNAs, including others involved in the cell cycle. In the nucleus, binds to capped splice factor-encoding mRNAs and stimulates their nuclear export to enhance splice factor production by increasing their cytoplasmic availability to the translation machinery. May also regulate splicing through interaction with the spliceosome in an RNA and m7G cap-dependent manner. Also binds to some pre-mRNAs and may play a role in their recruitment to the spliceosome. Promotes steady-state capping of a subset of coding and non-coding RNAs by mediating nuclear export of capping machinery mRNAs including RNMT, RNGTT and RAMAC to enhance their translation. Stimulates mRNA 3'-end processing by promoting the expression of several core cleavage complex factors required for mRNA cleavage and polyadenylation, and may also have a direct effect through its interaction with the CPSF3 cleavage enzyme. Rescues cells from apoptosis by promoting activation of serine/threonine-protein kinase AKT1 through mRNA export of NBS1 which potentiates AKT1 phosphorylation and also through mRNA export of AKT1 effectors, allowing for increased production of these proteins. This Mus musculus (Mouse) protein is Eukaryotic translation initiation factor 4E.